The primary structure comprises 309 residues: Ribonuclease Z (309 aa).

Zn(2+) contacts are provided by H63, H65, D67, H68, H141, D212, and H270. The active-site Proton acceptor is D67.

It belongs to the RNase Z family. In terms of assembly, homodimer. The cofactor is Zn(2+).

The catalysed reaction is Endonucleolytic cleavage of RNA, removing extra 3' nucleotides from tRNA precursor, generating 3' termini of tRNAs. A 3'-hydroxy group is left at the tRNA terminus and a 5'-phosphoryl group is left at the trailer molecule.. Its function is as follows. Zinc phosphodiesterase, which displays some tRNA 3'-processing endonuclease activity. Probably involved in tRNA maturation, by removing a 3'-trailer from precursor tRNA. This chain is Ribonuclease Z, found in Lactobacillus delbrueckii subsp. bulgaricus (strain ATCC 11842 / DSM 20081 / BCRC 10696 / JCM 1002 / NBRC 13953 / NCIMB 11778 / NCTC 12712 / WDCM 00102 / Lb 14).